The sequence spans 559 residues: Dihydroxy-acid dehydratase (559 aa).

Cys56 is a [2Fe-2S] cluster binding site. Mg(2+) is bound at residue Asp88. Residue Cys129 participates in [2Fe-2S] cluster binding. Mg(2+) contacts are provided by Asp130 and Lys131. Residue Lys131 is modified to N6-carboxylysine. Residue Cys198 coordinates [2Fe-2S] cluster. Glu449 provides a ligand contact to Mg(2+). The active-site Proton acceptor is the Ser475.

The protein belongs to the IlvD/Edd family. Homodimer. [2Fe-2S] cluster is required as a cofactor. Requires Mg(2+) as cofactor.

The catalysed reaction is (2R)-2,3-dihydroxy-3-methylbutanoate = 3-methyl-2-oxobutanoate + H2O. It carries out the reaction (2R,3R)-2,3-dihydroxy-3-methylpentanoate = (S)-3-methyl-2-oxopentanoate + H2O. The protein operates within amino-acid biosynthesis; L-isoleucine biosynthesis; L-isoleucine from 2-oxobutanoate: step 3/4. Its pathway is amino-acid biosynthesis; L-valine biosynthesis; L-valine from pyruvate: step 3/4. Functionally, functions in the biosynthesis of branched-chain amino acids. Catalyzes the dehydration of (2R,3R)-2,3-dihydroxy-3-methylpentanoate (2,3-dihydroxy-3-methylvalerate) into 2-oxo-3-methylpentanoate (2-oxo-3-methylvalerate) and of (2R)-2,3-dihydroxy-3-methylbutanoate (2,3-dihydroxyisovalerate) into 2-oxo-3-methylbutanoate (2-oxoisovalerate), the penultimate precursor to L-isoleucine and L-valine, respectively. This Ruthia magnifica subsp. Calyptogena magnifica protein is Dihydroxy-acid dehydratase.